The chain runs to 650 residues: Cytosolic Fe-S cluster assembly factor NAR1 (650 aa).

The [4Fe-4S] cluster site is built by cysteine 22, cysteine 81, cysteine 84, cysteine 87, cysteine 215, cysteine 270, cysteine 480, and cysteine 484.

This sequence belongs to the NARF family.

Its function is as follows. Component of the cytosolic Fe/S protein assembly machinery. Required for maturation of extramitochondrial Fe/S proteins. May play a role in the transfer of pre-assembled Fe/S clusters to target apoproteins. This is Cytosolic Fe-S cluster assembly factor NAR1 (NAR1) from Cryptococcus neoformans var. neoformans serotype D (strain JEC21 / ATCC MYA-565) (Filobasidiella neoformans).